A 428-amino-acid polypeptide reads, in one-letter code: uncharacterized protein (428 aa).

Disordered stretches follow at residues 1–25 (MRDN…PTRT), 157–219 (DTAK…TEQV), and 247–271 (DFGT…PWRP). A compositionally biased stretch (polar residues) spans 12 to 22 (GSESQQTTYDP). Residues 157-171 (DTAKSNEKLQGDESK) are compositionally biased toward basic and acidic residues. The span at 172–186 (SSNGSSSTSTTTQRG) shows a compositional bias: low complexity. The span at 206 to 217 (GSQGNSGEQGTE) shows a compositional bias: polar residues.

This sequence belongs to the adhesin P1 family.

This is an uncharacterized protein from Mycoplasma pneumoniae (strain ATCC 29342 / M129 / Subtype 1) (Mycoplasmoides pneumoniae).